We begin with the raw amino-acid sequence, 618 residues long: Proline--tRNA ligase (618 aa).

Belongs to the class-II aminoacyl-tRNA synthetase family. ProS type 1 subfamily. In terms of assembly, homodimer.

It localises to the cytoplasm. It carries out the reaction tRNA(Pro) + L-proline + ATP = L-prolyl-tRNA(Pro) + AMP + diphosphate. Its function is as follows. Catalyzes the attachment of proline to tRNA(Pro) in a two-step reaction: proline is first activated by ATP to form Pro-AMP and then transferred to the acceptor end of tRNA(Pro). As ProRS can inadvertently accommodate and process non-cognate amino acids such as alanine and cysteine, to avoid such errors it has two additional distinct editing activities against alanine. One activity is designated as 'pretransfer' editing and involves the tRNA(Pro)-independent hydrolysis of activated Ala-AMP. The other activity is designated 'posttransfer' editing and involves deacylation of mischarged Ala-tRNA(Pro). The misacylated Cys-tRNA(Pro) is not edited by ProRS. The protein is Proline--tRNA ligase of Streptococcus equi subsp. equi (strain 4047).